The primary structure comprises 265 residues: Shikimate dehydrogenase (NADP(+)) (265 aa).

Shikimate is bound by residues 15-17 (SLS) and T62. Catalysis depends on K66, which acts as the Proton acceptor. Residues N87 and D102 each contribute to the shikimate site. NADP(+)-binding positions include 125-129 (GAGGA), 149-154 (NRTLEK), and L209. Residue Y211 coordinates shikimate. Residue G233 coordinates NADP(+).

This sequence belongs to the shikimate dehydrogenase family. In terms of assembly, homodimer.

The catalysed reaction is shikimate + NADP(+) = 3-dehydroshikimate + NADPH + H(+). Its pathway is metabolic intermediate biosynthesis; chorismate biosynthesis; chorismate from D-erythrose 4-phosphate and phosphoenolpyruvate: step 4/7. Functionally, involved in the biosynthesis of the chorismate, which leads to the biosynthesis of aromatic amino acids. Catalyzes the reversible NADPH linked reduction of 3-dehydroshikimate (DHSA) to yield shikimate (SA). This is Shikimate dehydrogenase (NADP(+)) from Legionella pneumophila (strain Corby).